Reading from the N-terminus, the 201-residue chain is Cell division protein SepF (201 aa).

The span at 27–38 shows a compositional bias: basic and acidic residues; the sequence is VQERTSVQRDSR. Positions 27–99 are disordered; sequence VQERTSVQRD…PRVQNKDSVR (73 aa). The segment covering 43–54 has biased composition (polar residues); that stretch reads QEASQRSHMTNS. Residues 72–81 show a composition bias toward basic and acidic residues; that stretch reads NRQERQRVQR. The span at 83 to 92 shows a compositional bias: polar residues; that stretch reads NAYQQATPRV.

The protein belongs to the SepF family. As to quaternary structure, homodimer. Interacts with FtsZ.

The protein localises to the cytoplasm. Its function is as follows. Cell division protein that is part of the divisome complex and is recruited early to the Z-ring. Probably stimulates Z-ring formation, perhaps through the cross-linking of FtsZ protofilaments. Its function overlaps with FtsA. This chain is Cell division protein SepF, found in Streptococcus agalactiae serotype Ia (strain ATCC 27591 / A909 / CDC SS700).